The sequence spans 317 residues: L-lactate dehydrogenase 1 (317 aa).

NAD(+) contacts are provided by residues Val17, Asp38, Lys43, Tyr69, and 83-84; that span reads GA. Substrate-binding residues include Gln86 and Arg92. Residues Ser105, 122 to 124, and Ser147 contribute to the NAD(+) site; that span reads ATN. 124–127 is a binding site for substrate; that stretch reads NPVD. 152-155 is a substrate binding site; the sequence is DSAR. The Proton acceptor role is filled by His179. Tyr223 carries the phosphotyrosine modification. Thr232 lines the substrate pocket.

This sequence belongs to the LDH/MDH superfamily. LDH family. Homotetramer.

It is found in the cytoplasm. It catalyses the reaction (S)-lactate + NAD(+) = pyruvate + NADH + H(+). Its pathway is fermentation; pyruvate fermentation to lactate; (S)-lactate from pyruvate: step 1/1. Catalyzes the conversion of lactate to pyruvate (Potential). Appears to be the primary factor that allows S.aureus growth during nitrosative stress in both aerobically and anaerobically cultured cells. The polypeptide is L-lactate dehydrogenase 1 (Staphylococcus aureus (strain bovine RF122 / ET3-1)).